The sequence spans 467 residues: Glutamate--tRNA ligase (467 aa).

The 'HIGH' region signature appears at 9–19; the sequence is PSPTGFLHIGG. Residues 241–245 carry the 'KMSKS' region motif; the sequence is KLSKR. K244 is an ATP binding site.

This sequence belongs to the class-I aminoacyl-tRNA synthetase family. Glutamate--tRNA ligase type 1 subfamily. Monomer.

The protein localises to the cytoplasm. It catalyses the reaction tRNA(Glu) + L-glutamate + ATP = L-glutamyl-tRNA(Glu) + AMP + diphosphate. Functionally, catalyzes the attachment of glutamate to tRNA(Glu) in a two-step reaction: glutamate is first activated by ATP to form Glu-AMP and then transferred to the acceptor end of tRNA(Glu). In Methylobacillus flagellatus (strain ATCC 51484 / DSM 6875 / VKM B-1610 / KT), this protein is Glutamate--tRNA ligase.